Consider the following 100-residue polypeptide: EKC/KEOPS complex subunit GON7 (100 aa).

M1 carries the post-translational modification N-acetylmethionine. The segment at 61–100 (AAAPDEDLDGDDEDDAEDENNIDNRTNFDGPSAKRPKTPS) is disordered. Residues 64–81 (PDEDLDGDDEDDAEDENN) show a composition bias toward acidic residues.

As to quaternary structure, component of the EKC/KEOPS complex composed of at least GON7, TP53RK, TPRKB, OSGEP and LAGE3; the whole complex dimerizes.

The protein localises to the nucleus. Component of the EKC/KEOPS complex that is required for the formation of a threonylcarbamoyl group on adenosine at position 37 (t(6)A37) in tRNAs that read codons beginning with adenine. The complex is probably involved in the transfer of the threonylcarbamoyl moiety of threonylcarbamoyl-AMP (TC-AMP) to the N6 group of A37. GON7 plays a supporting role to the catalytic subunit OSGEP in the complex. This chain is EKC/KEOPS complex subunit GON7, found in Homo sapiens (Human).